Reading from the N-terminus, the 396-residue chain is NADH-quinone oxidoreductase subunit D (396 aa).

Belongs to the complex I 49 kDa subunit family. As to quaternary structure, NDH-1 is composed of 14 different subunits. Subunits NuoB, C, D, E, F, and G constitute the peripheral sector of the complex.

It localises to the cell inner membrane. The catalysed reaction is a quinone + NADH + 5 H(+)(in) = a quinol + NAD(+) + 4 H(+)(out). Functionally, NDH-1 shuttles electrons from NADH, via FMN and iron-sulfur (Fe-S) centers, to quinones in the respiratory chain. The immediate electron acceptor for the enzyme in this species is believed to be ubiquinone. Couples the redox reaction to proton translocation (for every two electrons transferred, four hydrogen ions are translocated across the cytoplasmic membrane), and thus conserves the redox energy in a proton gradient. The chain is NADH-quinone oxidoreductase subunit D from Brucella canis (strain ATCC 23365 / NCTC 10854 / RM-666).